A 157-amino-acid chain; its full sequence is Ribonuclease H (157 aa).

Residues 3 to 144 (NSKTVHLYTD…CDELARDAAT (142 aa)) form the RNase H type-1 domain. Mg(2+)-binding residues include Asp12, Glu50, Asp72, and Asp136.

It belongs to the RNase H family. In terms of assembly, monomer. Mg(2+) is required as a cofactor.

The protein localises to the cytoplasm. It carries out the reaction Endonucleolytic cleavage to 5'-phosphomonoester.. In terms of biological role, endonuclease that specifically degrades the RNA of RNA-DNA hybrids. This is Ribonuclease H from Idiomarina loihiensis (strain ATCC BAA-735 / DSM 15497 / L2-TR).